The following is a 112-amino-acid chain: Cell cycle protein GpsB (112 aa).

A coiled-coil region spans residues L32–S75.

Belongs to the GpsB family. Forms polymers through the coiled coil domains. Interacts with PBP1, MreC and EzrA.

The protein resides in the cytoplasm. In terms of biological role, divisome component that associates with the complex late in its assembly, after the Z-ring is formed, and is dependent on DivIC and PBP2B for its recruitment to the divisome. Together with EzrA, is a key component of the system that regulates PBP1 localization during cell cycle progression. Its main role could be the removal of PBP1 from the cell pole after pole maturation is completed. Also contributes to the recruitment of PBP1 to the division complex. Not essential for septum formation. In Streptococcus mutans serotype c (strain ATCC 700610 / UA159), this protein is Cell cycle protein GpsB.